Reading from the N-terminus, the 123-residue chain is Ribosome-binding factor A (123 aa).

This sequence belongs to the RbfA family. As to quaternary structure, monomer. Binds 30S ribosomal subunits, but not 50S ribosomal subunits or 70S ribosomes.

It is found in the cytoplasm. In terms of biological role, one of several proteins that assist in the late maturation steps of the functional core of the 30S ribosomal subunit. Associates with free 30S ribosomal subunits (but not with 30S subunits that are part of 70S ribosomes or polysomes). Required for efficient processing of 16S rRNA. May interact with the 5'-terminal helix region of 16S rRNA. The protein is Ribosome-binding factor A of Chlamydia trachomatis serovar A (strain ATCC VR-571B / DSM 19440 / HAR-13).